Here is a 273-residue protein sequence, read N- to C-terminus: Dermonecrotic toxin LdSicTox-alphaIB3aii (273 aa).

His5 is an active-site residue. Mg(2+) contacts are provided by Glu25 and Asp27. The Nucleophile role is filled by His41. 2 cysteine pairs are disulfide-bonded: Cys45–Cys51 and Cys47–Cys190. Asp85 provides a ligand contact to Mg(2+).

Belongs to the arthropod phospholipase D family. Class II subfamily. Requires Mg(2+) as cofactor. Expressed by the venom gland.

It is found in the secreted. The enzyme catalyses an N-(acyl)-sphingosylphosphocholine = an N-(acyl)-sphingosyl-1,3-cyclic phosphate + choline. It catalyses the reaction an N-(acyl)-sphingosylphosphoethanolamine = an N-(acyl)-sphingosyl-1,3-cyclic phosphate + ethanolamine. The catalysed reaction is a 1-acyl-sn-glycero-3-phosphocholine = a 1-acyl-sn-glycero-2,3-cyclic phosphate + choline. It carries out the reaction a 1-acyl-sn-glycero-3-phosphoethanolamine = a 1-acyl-sn-glycero-2,3-cyclic phosphate + ethanolamine. Dermonecrotic toxins cleave the phosphodiester linkage between the phosphate and headgroup of certain phospholipids (sphingolipid and lysolipid substrates), forming an alcohol (often choline) and a cyclic phosphate. This toxin acts on sphingomyelin (SM). It may also act on ceramide phosphoethanolamine (CPE), lysophosphatidylcholine (LPC) and lysophosphatidylethanolamine (LPE), but not on lysophosphatidylserine (LPS), and lysophosphatidylglycerol (LPG). It acts by transphosphatidylation, releasing exclusively cyclic phosphate products as second products. Induces dermonecrosis, hemolysis, increased vascular permeability, edema, inflammatory response, and platelet aggregation. The chain is Dermonecrotic toxin LdSicTox-alphaIB3aii from Loxosceles deserta (Desert recluse spider).